The sequence spans 350 residues: Glycogenin-1 (350 aa).

The residue at position 2 (threonine 2) is an N-acetylthreonine. Residues leucine 9, threonine 11, asparagine 12, and tyrosine 15 each coordinate UDP. The UDP-alpha-D-glucose site is built by leucine 9, threonine 11, asparagine 12, and tyrosine 15. Serine 44 bears the Phosphoserine mark. UDP is bound at residue arginine 77. UDP-alpha-D-glucose is bound by residues arginine 77, lysine 86, aspartate 102, alanine 103, aspartate 104, asparagine 133, serine 134, aspartate 160, aspartate 163, and glutamine 164. Aspartate 102, alanine 103, and aspartate 104 together coordinate UDP. A Mn(2+)-binding site is contributed by aspartate 102. Position 104 (aspartate 104) interacts with Mn(2+). Tyrosine 195 is a glycosylation site (O-linked (Glc...) tyrosine). Residues histidine 212, glycine 215, and lysine 218 each contribute to the UDP site. Histidine 212 contacts Mn(2+). Glycine 215 and lysine 218 together coordinate UDP-alpha-D-glucose. Residues 301 to 333 (SHLSLGEIPAMAQPFVSSEERKERWEQGQADYM) form an interaction with GYS1 region.

This sequence belongs to the glycosyltransferase 8 family. Glycogenin subfamily. In terms of assembly, part of the GYS1-GYG1 complex, a heterooctamer composed of a tetramer of GYS1 and 2 dimers of GYG1, where each GYS1 protomer binds to one GYG1 subunit (via GYG1 C-terminus); the GYS1 tetramer may dissociate from GYG1 dimers to continue glycogen polymerization on its own. May also form a heterooctamer complex with GYS2 (via GYG1 C-terminus). It depends on Mn(2+) as a cofactor. Self-glycosylated by the transfer of glucose residues from UDP-glucose to itself, forming an alpha-1,4-glycan of around 10 residues attached to Tyr-195. In terms of processing, phosphorylated. Highly expressed in skeletal muscle and heart, with lower levels in brain, lung, kidney and pancreas.

Its subcellular location is the cytoplasm. The protein resides in the nucleus. It carries out the reaction L-tyrosyl-[glycogenin] + UDP-alpha-D-glucose = alpha-D-glucosyl-L-tyrosyl-[glycogenin] + UDP + H(+). The catalysed reaction is [1,4-alpha-D-glucosyl](n)-L-tyrosyl-[glycogenin] + UDP-alpha-D-glucose = [1,4-alpha-D-glucosyl](n+1)-L-tyrosyl-[glycogenin] + UDP + H(+). The protein operates within glycan biosynthesis; glycogen biosynthesis. Its activity is regulated as follows. Inhibited by palladium ions. In terms of biological role, glycogenin participates in the glycogen biosynthetic process along with glycogen synthase and glycogen branching enzyme. It catalyzes the formation of a short alpha (1,4)-glucosyl chain covalently attached via a glucose 1-O-tyrosyl linkage to internal tyrosine residues and these chains act as primers for the elongation reaction catalyzed by glycogen synthase. The sequence is that of Glycogenin-1 from Homo sapiens (Human).